The primary structure comprises 721 residues: Sodium/hydrogen exchanger 6 (721 aa).

Residues 1-44 (MTSPKPWARSAGSCQTQRAVRTRKKECREEGESDTEKGPAASSA) form a disordered region. The span at 26-37 (ECREEGESDTEK) shows a compositional bias: basic and acidic residues. The next 12 helical transmembrane spans lie at 91-111 (SANL…IWLF), 123-143 (GLAM…IHVP), 196-216 (VTFD…FYAG), 231-251 (ILAY…SIMY), 272-292 (CLLF…AIFH), 298-318 (VELY…AIVL), 344-364 (IGIF…TGVV), 388-412 (MSWS…FCGI), 434-454 (FELL…LTLF), 456-476 (FQNH…IFLG), 499-519 (NFQH…ALAI), and 535-555 (LLIV…MLSC).

The protein belongs to the monovalent cation:proton antiporter 1 (CPA1) transporter (TC 2.A.36) family. In terms of assembly, homodimer. Interacts with RACK1; regulates the distribution of SLC9A6 between endosomes and the plasma membrane. In terms of processing, ubiquitinated (in vitro). Glycosylated.

It localises to the endosome membrane. It is found in the recycling endosome membrane. The protein resides in the early endosome membrane. The protein localises to the late endosome membrane. Its subcellular location is the cell membrane. It catalyses the reaction Na(+)(in) + H(+)(out) = Na(+)(out) + H(+)(in). The catalysed reaction is K(+)(in) + H(+)(out) = K(+)(out) + H(+)(in). In terms of biological role, endosomal Na(+), K(+)/H(+) antiporter. Mediates the electroneutral exchange of endosomal luminal H(+) for a cytosolic Na(+) or K(+). By facilitating proton efflux, SLC9A6 counteracts the acidity generated by vacuolar (V)-ATPase, thereby limiting luminal acidification. Responsible for alkalizing and maintaining the endosomal pH, and consequently in, e.g., endosome maturation and trafficking of recycling endosomal cargo. Plays a critical role during neurodevelopment by regulating synaptic development and plasticity. Implicated in the maintenance of cell polarity in a manner that is dependent on its ability to modulate intravesicular pH. Regulates intracelular pH in some specialized cells, osteoclasts and stereocilia where this transporter localizes to the plasma membrane. The sequence is that of Sodium/hydrogen exchanger 6 from Rattus norvegicus (Rat).